Here is a 359-residue protein sequence, read N- to C-terminus: Protein RecA (359 aa).

An ATP-binding site is contributed by 77 to 84; the sequence is GPESSGKT.

It belongs to the RecA family.

Its subcellular location is the cytoplasm. In terms of biological role, can catalyze the hydrolysis of ATP in the presence of single-stranded DNA, the ATP-dependent uptake of single-stranded DNA by duplex DNA, and the ATP-dependent hybridization of homologous single-stranded DNAs. It interacts with LexA causing its activation and leading to its autocatalytic cleavage. The chain is Protein RecA from Paramagnetospirillum magneticum (strain ATCC 700264 / AMB-1) (Magnetospirillum magneticum).